A 704-amino-acid chain; its full sequence is Ankyrin repeat and LEM domain-containing protein 1 homolog (704 aa).

Positions 1 to 29 are disordered; the sequence is MPPNGAITTTPRSRMPPTTPSSGKSRPKK. The span at 8 to 22 shows a compositional bias: low complexity; that stretch reads TTTPRSRMPPTTPSS. ANK repeat units lie at residues 28–59 and 63–93; these read KKET…NVNA and DGAT…PMSA. Disordered stretches follow at residues 247 to 293, 314 to 358, and 381 to 421; these read NEDV…SQET, NAGL…ANTT, and SKSA…TTVD. Positions 276-288 are enriched in basic residues; the sequence is RKQRTPVNHHKRS. 2 stretches are compositionally biased toward low complexity: residues 329 to 346 and 384 to 405; these read EPAI…TPKT and AKSS…SFSS. An LEM domain is found at 425-470; that stretch reads IRKIRRLREGELKSELKKFGISPAGPLDARTRRLYEKKLLIERRKI. The region spanning 525–635 is the GIY-YIG domain; the sequence is YNAFCYLIMD…AVKLKNLRNK (111 aa).

In terms of processing, phosphorylated. Phosphorylated during telophase when localized at the midbody.

It localises to the cytoplasm. It is found in the nucleus. The protein localises to the chromosome. Its subcellular location is the midbody. The protein resides in the cytoskeleton. It localises to the spindle. Inhibited by EDTA. In terms of biological role, endonuclease which, in association with baf-1, plays an essential role during embryogenesis in the DNA repair response following DNA damage probably by ensuring proper chromosome segregation. Also required during postembryonic cell divisions after DNA damage caused by ionizing radiation to ensure normal cell proliferation. Resolves chromatin bridges in late mitosis that result from incomplete DNA replication, defective chromosome condensation or unresolved recombination intermediates. Together with brc-1, contributes to genome integrity by resolving mitotic chromatin bridges that result from incomplete processing of DNA breaks. In parallel to the slx-1/mus-81 pathway, acts in processing early recombination intermediates in meiotic prophase I to prevent illegitimate recombination. Also involved in processing remaining, erroneous recombination intermediates that persist into the second meiotic division. The chain is Ankyrin repeat and LEM domain-containing protein 1 homolog from Caenorhabditis elegans.